The chain runs to 689 residues: Glycine--tRNA ligase beta subunit (689 aa).

Belongs to the class-II aminoacyl-tRNA synthetase family. Tetramer of two alpha and two beta subunits.

The protein localises to the cytoplasm. The catalysed reaction is tRNA(Gly) + glycine + ATP = glycyl-tRNA(Gly) + AMP + diphosphate. The chain is Glycine--tRNA ligase beta subunit from Shewanella sediminis (strain HAW-EB3).